The primary structure comprises 565 residues: Thiol:disulfide interchange protein DsbD (565 aa).

The N-terminal stretch at 1–19 is a signal peptide; sequence MAQRIFTLILLLCSTSVFA. Cystine bridges form between cysteine 122/cysteine 128 and cysteine 182/cysteine 304. Transmembrane regions (helical) follow at residues 163 to 183, 208 to 228, 243 to 263, 296 to 316, 323 to 343, 357 to 377, and 384 to 404; these read LPFS…TPCV, LLTF…GLVV, YVLI…FGLF, IAGL…LLYI, WLGG…LMLI, WMEQ…VFLL, and VWGL…AFIT. Residues 434–565 enclose the Thioredoxin domain; the sequence is WAFGATHTAQ…FSAHLRDRQP (132 aa). Cysteine 480 and cysteine 483 form a disulfide bridge.

It belongs to the thioredoxin family. DsbD subfamily.

The protein localises to the cell inner membrane. The catalysed reaction is [protein]-dithiol + NAD(+) = [protein]-disulfide + NADH + H(+). It catalyses the reaction [protein]-dithiol + NADP(+) = [protein]-disulfide + NADPH + H(+). Functionally, required to facilitate the formation of correct disulfide bonds in some periplasmic proteins and for the assembly of the periplasmic c-type cytochromes. Acts by transferring electrons from cytoplasmic thioredoxin to the periplasm. This transfer involves a cascade of disulfide bond formation and reduction steps. This Shigella flexneri serotype 5b (strain 8401) protein is Thiol:disulfide interchange protein DsbD.